Here is a 405-residue protein sequence, read N- to C-terminus: Argininosuccinate synthase (405 aa).

ATP contacts are provided by residues 10–18 and Ala37; that span reads AYSGGLDTS. Positions 88 and 93 each coordinate L-citrulline. Residue Gly118 coordinates ATP. The L-aspartate site is built by Thr120, Asn124, and Asp125. Asn124 is an L-citrulline binding site. Residues Arg128, Ser177, Ser186, Glu263, and Tyr275 each coordinate L-citrulline.

It belongs to the argininosuccinate synthase family. Type 1 subfamily. Homotetramer.

Its subcellular location is the cytoplasm. The enzyme catalyses L-citrulline + L-aspartate + ATP = 2-(N(omega)-L-arginino)succinate + AMP + diphosphate + H(+). It functions in the pathway amino-acid biosynthesis; L-arginine biosynthesis; L-arginine from L-ornithine and carbamoyl phosphate: step 2/3. The protein is Argininosuccinate synthase of Acetivibrio thermocellus (strain ATCC 27405 / DSM 1237 / JCM 9322 / NBRC 103400 / NCIMB 10682 / NRRL B-4536 / VPI 7372) (Clostridium thermocellum).